A 702-amino-acid chain; its full sequence is Ribosomal RNA large subunit methyltransferase K/L (702 aa).

Residues 43–154 enclose the THUMP domain; sequence LIYQSLMWSR…KETASIALDL (112 aa).

Belongs to the methyltransferase superfamily. RlmKL family.

The protein resides in the cytoplasm. It carries out the reaction guanosine(2445) in 23S rRNA + S-adenosyl-L-methionine = N(2)-methylguanosine(2445) in 23S rRNA + S-adenosyl-L-homocysteine + H(+). The catalysed reaction is guanosine(2069) in 23S rRNA + S-adenosyl-L-methionine = N(2)-methylguanosine(2069) in 23S rRNA + S-adenosyl-L-homocysteine + H(+). Specifically methylates the guanine in position 2445 (m2G2445) and the guanine in position 2069 (m7G2069) of 23S rRNA. The sequence is that of Ribosomal RNA large subunit methyltransferase K/L from Salmonella arizonae (strain ATCC BAA-731 / CDC346-86 / RSK2980).